Consider the following 419-residue polypeptide: Putative zinc metalloprotease SPs1691 (419 aa).

Residue H18 coordinates Zn(2+). E19 is an active-site residue. H22 is a binding site for Zn(2+). A run of 4 helical transmembrane segments spans residues 169-191 (LITNFAGPMNNFILGIVVFILLV), 301-323 (LAWSGAFTILNALKGLITGFSLN), 343-365 (LESVLSLMAMLSINLGIFNLIPI), and 392-411 (AYITLAGVAIMVVLMIAVTW). In terms of domain architecture, PDZ spans 175–274 (GPMNNFILGI…LKTVAVKPQK (100 aa)).

This sequence belongs to the peptidase M50B family. Requires Zn(2+) as cofactor.

It is found in the cell membrane. In Streptococcus pyogenes serotype M3 (strain SSI-1), this protein is Putative zinc metalloprotease SPs1691 (eep).